A 326-amino-acid chain; its full sequence is Ig gamma-1 chain C region (326 aa).

Residues Ala-1–Ile-97 form a CH1 region. Cysteines 27 and 82 form a disulfide. Positions Val-98–Thr-112 are hinge. A CH2 region spans residues Gly-113–Glu-219. 2 disulfide bridges follow: Cys-140–Cys-200 and Cys-246–Cys-304. Residue Asn-176 is glycosylated (N-linked (GlcNAc...) asparagine). Positions Gly-220–Lys-326 are CH3.

The sequence is that of Ig gamma-1 chain C region from Rattus norvegicus (Rat).